Here is a 414-residue protein sequence, read N- to C-terminus: Zinc metalloproteinase nas-26 (414 aa).

Positions 1–20 (MTSSLVLILAPLALVAIGEA) are cleaved as a signal peptide. The propeptide occupies 21–61 (AFGNSSKIFEIPGLEVMASDKYPHFTTIETVSRTKVHRHRR). N-linked (GlcNAc...) asparagine glycosylation occurs at N24. Positions 62–264 (EVIAGQIYDW…AKVINDIYCP (203 aa)) constitute a Peptidase M12A domain. Intrachain disulfides connect C103-C263, C126-C146, C267-C286, C289-C300, C308-C331, and C358-C378. H154 provides a ligand contact to Zn(2+). E155 is a catalytic residue. Zn(2+) contacts are provided by H158 and H164. The 57-residue stretch at 251–307 (AFLDAKVINDIYCPNACQGRNHLNCLAGGYPDPNNCNVCRCPEGLGGPDCGRLQPSP) folds into the EGF-like domain. The CUB domain maps to 308–414 (CGGEIHASDQ…RFSLRFRRQA (107 aa)).

It depends on Zn(2+) as a cofactor.

The protein localises to the secreted. Metalloprotease. The sequence is that of Zinc metalloproteinase nas-26 (toh-1) from Caenorhabditis elegans.